The primary structure comprises 730 residues: PWWP domain-containing protein 2A (730 aa).

Positions 1–15 (MAAVAAEAAATAASP) are enriched in low complexity. The tract at residues 1-134 (MAAVAAEAAA…PPAGGDSAVS (134 aa)) is disordered. Residues 66 to 77 (PLPPPPPPPPPG) are compositionally biased toward pro residues. Phosphoserine is present on residues serine 82 and serine 99. The segment covering 91–108 (PEPAAVPVSPPEQPPAAP) has biased composition (pro residues). Residues 128-346 (GGDSAVSHLI…KLKTDHKVDG (219 aa)) are interaction with HDAC1 and MTA1. Lysine 188 participates in a covalent cross-link: Glycyl lysine isopeptide (Lys-Gly) (interchain with G-Cter in SUMO2). Disordered regions lie at residues 257–276 (YNQSIPQPPPRKIKRPKRKM), 311–355 (IRKG…SQRR), and 409–531 (KEKA…LGKK). Residues 267-276 (RKIKRPKRKM) show a composition bias toward basic residues. Composition is skewed to basic and acidic residues over residues 311–329 (IRKGSSDSSRYEDKKRRND) and 341–354 (DHKVDGKNQNESQR). The segment at 396 to 547 (MDHAKAREVL…SVYLTLNQET (152 aa)) is interaction with the H2A.Z/H2AZ1. Over residues 488–501 (SAGEAPSEKPSPSE) the composition is skewed to low complexity. Over residues 512–527 (DTSRVRVPGEQEELRM) the composition is skewed to basic and acidic residues. Positions 630–690 (VGDIVWAKIY…LSQLSPFLEN (61 aa)) constitute a PWWP domain.

As to quaternary structure, component of a MTA1-specific subcomplex of the NuRD complex (M1HR), which is composed of PWWP2A, MTA1/2, HDAC1/2, and RBBP4/7 but does not contain CHD4 and MBD3. Interacts with MTA1; the interaction mediates the association of PWWP2A with the M1HR complex. Interacts with H2A.Z/H2AZ1. Interacts (via PWWP domain) with histone H3 trimethylated at 'Lys-36' (H3K36me3). Does not interact with CHD4 and MBD3.

It is found in the nucleus. Functionally, chromatin-binding protein that acts as an adapter between distinct nucleosome components (H3K36me3 or H2A.Z) and chromatin-modifying complexes, contributing to the regulation of the levels of histone acetylation at actively transcribed genes. Competes with CHD4 and MBD3 for interaction with MTA1 to form a NuRD subcomplex, preventing the formation of full NuRD complex (containing CHD4 and MBD3), leading to recruitment of HDACs to gene promoters resulting in turn in the deacetylation of nearby H3K27 and H2A.Z. Plays a role in facilitating transcriptional elongation and repression of spurious transcription initiation through regulation of histone acetylation. Essential for proper mitosis progression. This chain is PWWP domain-containing protein 2A (Pwwp2a), found in Mus musculus (Mouse).